The primary structure comprises 440 residues: MVDDENRRRGLLGRRSHARSWLPVKPRRILATAGSFTILVLRALITHDIPRLAASLAYTSLLALVPLIAIALAILAAFPGFGDERERMVAWIIETFVPYRRTEILDQVEHFVGAAAGLTALGVAGLTLTAIILLLTIESSLNAIFRVEKSRHPLARLLVYWSVLTGGPLLMGLSFSLSSYLVAIRHLVGTDVMSPFDALTPTLGPPLLSLTAMTLLYMLVPNRPVPLFHALAGALVATLASALLRSAFLMVITRGLSYETLYGALAALPAFLVWMYLSWAVVLMGAVTAAEIPNWKMARRLTRAGQDERAARLRIAVEIMVAAARAYGEGQGDGASRRALSALTATPDRRQAGVLRDLDKAGLLIRDEDGAVLPGRDPRRITLAEILHALTLAPPTGTVGGPGWPDLLRHALETAGGDYDRALGLSLDALVQAEPLGARI.

7 helical membrane passes run 29 to 49 (ILAT…THDI), 61 to 81 (LLAL…FPGF), 117 to 137 (GLTA…LLTI), 157 to 177 (LLVY…SFSL), 201 to 221 (PTLG…MLVP), 224 to 244 (PVPL…SALL), and 264 to 284 (ALAA…VVLM).

Belongs to the UPF0761 family.

It localises to the cell inner membrane. This is UPF0761 membrane protein Rru_A2625 from Rhodospirillum rubrum (strain ATCC 11170 / ATH 1.1.1 / DSM 467 / LMG 4362 / NCIMB 8255 / S1).